The following is a 189-amino-acid chain: Large ribosomal subunit protein uL13 (189 aa).

It belongs to the universal ribosomal protein uL13 family.

In Salmo trutta (Brown trout), this protein is Large ribosomal subunit protein uL13 (rpl13a).